The chain runs to 443 residues: Probable D-serine dehydratase (443 aa).

Lysine 118 bears the N6-(pyridoxal phosphate)lysine mark.

It belongs to the serine/threonine dehydratase family. DsdA subfamily. Pyridoxal 5'-phosphate is required as a cofactor.

The catalysed reaction is D-serine = pyruvate + NH4(+). The sequence is that of Probable D-serine dehydratase from Aeromonas salmonicida (strain A449).